The chain runs to 410 residues: Adenosine receptor A2a (410 aa).

At 1–4 (MGSS) the chain is on the extracellular side. A helical transmembrane segment spans residues 5–29 (VYIMVELAIAVLAILGNVLVCWAVW). Residues 30–39 (INSNLQNVTN) are Cytoplasmic-facing. Residues 40 to 63 (FFVVSLAAADIAVGVLAIPFAITI) form a helical membrane-spanning segment. The Extracellular portion of the chain corresponds to 64–74 (STGFCAACHGC). Intrachain disulfides connect C68–C154, C71–C143, and C74–C161. The helical transmembrane segment at 75 to 97 (LFFACFVLVLTQSSIFSLLAIAI) threads the bilayer. Over 98–117 (DRYIAIRIPLRYNGLVTGMR) the chain is Cytoplasmic. The helical transmembrane segment at 118-140 (AKGIIAICWVLSFAIGLTPMLGW) threads the bilayer. Over 141–168 (NNCSQKDENSTKTCGEGRVTCLFEDVVP) the chain is Extracellular. Residues N142 and N149 are each glycosylated (N-linked (GlcNAc...) asparagine). Position 164 (E164) interacts with adenosine. A helical transmembrane segment spans residues 169-193 (MNYMVYYNFFAFVLLPLLLMLAIYL). Over 194 to 229 (RIFLAARRQLKQMESQPLPGERTRSTLQKEVHAAKS) the chain is Cytoplasmic. A helical membrane pass occupies residues 230–253 (LAIIVGLFALCWLPLHIINCFTFF). N248 is an adenosine binding site. Cysteines 254 and 257 form a disulfide. At 254–261 (CSTCQHAP) the chain is on the extracellular side. A helical membrane pass occupies residues 262-285 (PWLMYLAIILSHSNSVVNPFIYAY). The adenosine site is built by S272 and H273. The Cytoplasmic segment spans residues 286-410 (RIREFRQTFR…ASWSSEFAPS (125 aa)). The interval 322-410 (HSTEGEQVSL…ASWSSEFAPS (89 aa)) is interaction with GAS2L2. The tract at residues 342–410 (ANGSAPHSGR…ASWSSEFAPS (69 aa)) is disordered. Over residues 377–389 (TQEHQEGQEHPGL) the composition is skewed to basic and acidic residues. Positions 401–410 (ASWSSEFAPS) are enriched in polar residues.

This sequence belongs to the G-protein coupled receptor 1 family. In terms of assembly, interacts (via cytoplasmic C-terminal domain) with USP4; the interaction is direct. May interact with DRD4. Interacts with NECAB2. Interacts (via cytoplasmic C-terminal domain) with GAS2L2; interaction enhances receptor-mediated adenylyl cyclase activity. Ubiquitinated. Deubiquitinated by USP4; leading to stabilization and expression at the cell surface.

It is found in the cell membrane. Functionally, receptor for adenosine. The activity of this receptor is mediated by G proteins which activate adenylyl cyclase. The sequence is that of Adenosine receptor A2a (Adora2a) from Mus musculus (Mouse).